Consider the following 285-residue polypeptide: MKFVGAHVSAAGGVDQAVIRAHELEATAFALFTKNQRQWRAAPLAEDVIEKFKLACEKYGYTSAQILPHDSYLINLGHPVTEALEKSREAFIDELVRCQQLGLSLLNFHPGSHLLQIDEDQCLARIAESINIALDATEGVTAVIENTAGQGSNLGFKFEHLAAIIERVEDKSRVGVCIDTCHAFAAGYDLRTEEDCEHTFAALGKIVGFQYLRGMHLNDAKSEFNSRVDRHHSLGEGNIGKTVFSYIMRDSRFDNIPLILETVNMDIWAEEIAWLKSQAEIEPSL.

9 residues coordinate Zn(2+): His69, His109, Glu145, Asp179, His182, His216, Asp229, His231, and Glu261.

The protein belongs to the AP endonuclease 2 family. Requires Zn(2+) as cofactor.

It carries out the reaction Endonucleolytic cleavage to 5'-phosphooligonucleotide end-products.. In terms of biological role, endonuclease IV plays a role in DNA repair. It cleaves phosphodiester bonds at apurinic or apyrimidinic (AP) sites, generating a 3'-hydroxyl group and a 5'-terminal sugar phosphate. This is Probable endonuclease 4 from Yersinia pestis bv. Antiqua (strain Antiqua).